A 232-amino-acid chain; its full sequence is Oxidoreductase 1 (232 aa).

Belongs to the MQO family. It depends on FAD as a cofactor.

In terms of biological role, oxidoreductase; part of the gene cluster that mediates the biosynthesis of elsinochromes, pigments consisting of at least four interconvertible tautomers (A, B, C and D) that have a core phenolic quinone to which various side chains are attached and which play an important role in fungal pathogenesis. The non-reducing polyketide synthase PKS1 was proposed to iteratively catalyze decarboxylation between acetyl-CoA and malonyl-CoA subunits for polyketide chain elongation. The released polyketide undergoes cyclization to form an aromatic ring, and proceeds via serial modification steps to produce the heptaketide back- bone of elsinochrome. As elsinochrome has a symmetrical structure, two identical heptaketides are fused to form a core 1,2-dihydrobenzo-perylene ring structure, which can then be successively modified to produce the various derivatives of elsinochrome. Some of these reactions may be cooperatively carried out, at least in part, by the products of RDT1, OXR1 and PKS1. PRF1, embedded within the elsinochrome cluster possibly functions to stabilize some of the biosynthetic enzymes required for elsinochrome production. As prefoldin is a hexamer containing 2 a and 4 b subunits, additional prefoldin subunits, whose coding genes may not immediately link to the elsinochrome biosynthetic gene cluster, are required to fulfill the chaperone function. In addition, no methyltransferase-coding gene exists within the biosynthetic gene cluster, even though elsinochrome has four methyl groups at positions C3, C7, C8 and C12. Apparently, the identified gene cluster does not contain the entire entourage of genes responsible for elsinochrome biosynthesis. Once elsinochrome is synthesized, it must be exported outside the fungal cells, which is probably accomplished by the ECT1 transporter, to avoid toxicity. This Elsinoe fawcettii (Citrus scab fungus) protein is Oxidoreductase 1.